We begin with the raw amino-acid sequence, 242 residues long: Probable transcriptional regulatory protein XOO1543 (242 aa).

Belongs to the TACO1 family.

It localises to the cytoplasm. In Xanthomonas oryzae pv. oryzae (strain MAFF 311018), this protein is Probable transcriptional regulatory protein XOO1543.